The sequence spans 207 residues: 3-demethoxyubiquinol 3-hydroxylase (207 aa).

Fe cation contacts are provided by glutamate 56, glutamate 86, histidine 89, glutamate 138, glutamate 170, and histidine 173.

This sequence belongs to the COQ7 family. It depends on Fe cation as a cofactor.

The protein resides in the cell membrane. The catalysed reaction is a 5-methoxy-2-methyl-3-(all-trans-polyprenyl)benzene-1,4-diol + AH2 + O2 = a 3-demethylubiquinol + A + H2O. Its pathway is cofactor biosynthesis; ubiquinone biosynthesis. Functionally, catalyzes the hydroxylation of 2-nonaprenyl-3-methyl-6-methoxy-1,4-benzoquinol during ubiquinone biosynthesis. The protein is 3-demethoxyubiquinol 3-hydroxylase of Cupriavidus necator (strain ATCC 17699 / DSM 428 / KCTC 22496 / NCIMB 10442 / H16 / Stanier 337) (Ralstonia eutropha).